Consider the following 396-residue polypeptide: Tryptophan synthase beta chain (396 aa).

Residue Lys-86 is modified to N6-(pyridoxal phosphate)lysine.

It belongs to the TrpB family. In terms of assembly, tetramer of two alpha and two beta chains. It depends on pyridoxal 5'-phosphate as a cofactor.

It carries out the reaction (1S,2R)-1-C-(indol-3-yl)glycerol 3-phosphate + L-serine = D-glyceraldehyde 3-phosphate + L-tryptophan + H2O. It participates in amino-acid biosynthesis; L-tryptophan biosynthesis; L-tryptophan from chorismate: step 5/5. In terms of biological role, the beta subunit is responsible for the synthesis of L-tryptophan from indole and L-serine. This Aliivibrio fischeri (strain ATCC 700601 / ES114) (Vibrio fischeri) protein is Tryptophan synthase beta chain.